The primary structure comprises 43 residues: Protein PsbN (43 aa).

The helical transmembrane segment at 7–29 (LSIALAAVCIGVTGYSIYLSFGP) threads the bilayer.

The protein belongs to the PsbN family.

It is found in the cellular thylakoid membrane. In terms of biological role, may play a role in photosystem I and II biogenesis. The protein is Protein PsbN of Thermosynechococcus vestitus (strain NIES-2133 / IAM M-273 / BP-1).